The following is a 430-amino-acid chain: Pre-mRNA-processing protein 45 (430 aa).

The segment covering 1–26 (MSFRTLSSLLPSPQNSEVSESSAFSR) has biased composition (polar residues). 3 disordered regions span residues 1-28 (MSFR…SRQS), 280-299 (MERN…NKMS), and 370-430 (PTTG…PHTS).

This sequence belongs to the SNW family. In terms of assembly, associated with the spliceosome.

It is found in the nucleus. Involved in pre-mRNA splicing. This Kluyveromyces lactis (strain ATCC 8585 / CBS 2359 / DSM 70799 / NBRC 1267 / NRRL Y-1140 / WM37) (Yeast) protein is Pre-mRNA-processing protein 45 (PRP45).